The primary structure comprises 368 residues: DNA replication and repair protein RecF (368 aa).

30-37 (GNNAQGKT) lines the ATP pocket.

This sequence belongs to the RecF family.

It localises to the cytoplasm. The RecF protein is involved in DNA metabolism; it is required for DNA replication and normal SOS inducibility. RecF binds preferentially to single-stranded, linear DNA. It also seems to bind ATP. The chain is DNA replication and repair protein RecF from Streptococcus pyogenes serotype M49 (strain NZ131).